Here is a 961-residue protein sequence, read N- to C-terminus: Valine--tRNA ligase (961 aa).

The 'HIGH' region motif lies at Pro48–His58. Positions Lys560–Ser564 match the 'KMSKS' region motif. Lys563 is an ATP binding site. A coiled-coil region spans residues Phe892–Leu961.

The protein belongs to the class-I aminoacyl-tRNA synthetase family. ValS type 1 subfamily. As to quaternary structure, monomer.

The protein resides in the cytoplasm. The enzyme catalyses tRNA(Val) + L-valine + ATP = L-valyl-tRNA(Val) + AMP + diphosphate. Functionally, catalyzes the attachment of valine to tRNA(Val). As ValRS can inadvertently accommodate and process structurally similar amino acids such as threonine, to avoid such errors, it has a 'posttransfer' editing activity that hydrolyzes mischarged Thr-tRNA(Val) in a tRNA-dependent manner. This Haemophilus ducreyi (strain 35000HP / ATCC 700724) protein is Valine--tRNA ligase.